The sequence spans 585 residues: YTH domain-containing family protein 3 (585 aa).

Disordered regions lie at residues 1–51, 244–277, and 304–350; these read MSAT…SYPP, KPAK…MNIG, and PQPL…QPQL. S2 carries the post-translational modification N-acetylserine. A compositionally biased stretch (polar residues) spans 15–24; sequence NKVSVQNGSI. S23 carries the post-translational modification Phosphoserine. Positions 244–254 are enriched in basic residues; it reads KPAKPQPKLKP. The segment covering 329–350 has biased composition (low complexity); it reads QQQQGPQPQAQPHQVQSQQPQL. The YTH domain occupies 416–550; sequence GRVFIIKSYS…EKAKQVLKII (135 aa). RNA-binding positions include 422–424, D428, 438–439, N468, W492, and W497; these read KSY and WC.

Belongs to the YTHDF family. YTHDF3 subfamily. As to quaternary structure, interacts with CNOT1; promoting recruitment of the CCR4-NOT complex. Interacts with YTHDF1. Interacts with YTHDF2. Interacts with PAN3.

The protein resides in the cytoplasm. It is found in the cytosol. Its subcellular location is the P-body. The protein localises to the stress granule. Specifically recognizes and binds N6-methyladenosine (m6A)-containing RNAs, and regulates their stability. M6A is a modification present at internal sites of mRNAs and some non-coding RNAs and plays a role in mRNA stability and processing. Acts as a regulator of mRNA stability by promoting degradation of m6A-containing mRNAs via interaction with the CCR4-NOT complex or PAN3. The YTHDF paralogs (YTHDF1, YTHDF2 and YTHDF3) share m6A-containing mRNAs targets and act redundantly to mediate mRNA degradation and cellular differentiation. Acts as a negative regulator of type I interferon response by down-regulating interferon-stimulated genes (ISGs) expression: acts by binding to FOXO3 mRNAs. Binds to FOXO3 mRNAs independently of METTL3-mediated m6A modification. Can also act as a regulator of mRNA stability in cooperation with YTHDF2 by binding to m6A-containing mRNA and promoting their degradation. Recognizes and binds m6A-containing circular RNAs (circRNAs); circRNAs are generated through back-splicing of pre-mRNAs, a non-canonical splicing process promoted by dsRNA structures across circularizing exons. Promotes formation of phase-separated membraneless compartments, such as P-bodies or stress granules, by undergoing liquid-liquid phase separation upon binding to mRNAs containing multiple m6A-modified residues: polymethylated mRNAs act as a multivalent scaffold for the binding of YTHDF proteins, juxtaposing their disordered regions and thereby leading to phase separation. The resulting mRNA-YTHDF complexes then partition into different endogenous phase-separated membraneless compartments, such as P-bodies, stress granules or neuronal RNA granules. May also recognize and bind N1-methyladenosine (m1A)-containing mRNAs: inhibits trophoblast invasion by binding to m1A-methylated transcripts of IGF1R, promoting their degradation. This is YTH domain-containing family protein 3 from Mus musculus (Mouse).